The primary structure comprises 1397 residues: DNA-directed RNA polymerase subunit beta' (1397 aa).

Residues Cys-75, Cys-77, Cys-90, and Cys-93 each contribute to the Zn(2+) site. 3 residues coordinate Mg(2+): Asp-465, Asp-467, and Asp-469. Zn(2+) contacts are provided by Cys-819, Cys-893, Cys-900, and Cys-903.

The protein belongs to the RNA polymerase beta' chain family. In terms of assembly, the RNAP catalytic core consists of 2 alpha, 1 beta, 1 beta' and 1 omega subunit. When a sigma factor is associated with the core the holoenzyme is formed, which can initiate transcription. Requires Mg(2+) as cofactor. Zn(2+) is required as a cofactor.

It carries out the reaction RNA(n) + a ribonucleoside 5'-triphosphate = RNA(n+1) + diphosphate. DNA-dependent RNA polymerase catalyzes the transcription of DNA into RNA using the four ribonucleoside triphosphates as substrates. The sequence is that of DNA-directed RNA polymerase subunit beta' from Acinetobacter baumannii (strain SDF).